A 224-amino-acid chain; its full sequence is Ribose-5-phosphate isomerase A (224 aa).

Substrate contacts are provided by residues 32–35 (TGST), 85–88 (DGAD), and 98–101 (KGGG). The Proton acceptor role is filled by Glu107. Lys125 is a binding site for substrate.

It belongs to the ribose 5-phosphate isomerase family. As to quaternary structure, homodimer.

The catalysed reaction is aldehydo-D-ribose 5-phosphate = D-ribulose 5-phosphate. It functions in the pathway carbohydrate degradation; pentose phosphate pathway; D-ribose 5-phosphate from D-ribulose 5-phosphate (non-oxidative stage): step 1/1. Its function is as follows. Catalyzes the reversible conversion of ribose-5-phosphate to ribulose 5-phosphate. This chain is Ribose-5-phosphate isomerase A, found in Pseudomonas entomophila (strain L48).